The primary structure comprises 95 residues: Aspartyl/glutamyl-tRNA(Asn/Gln) amidotransferase subunit C (95 aa).

Belongs to the GatC family. Heterotrimer of A, B and C subunits.

The catalysed reaction is L-glutamyl-tRNA(Gln) + L-glutamine + ATP + H2O = L-glutaminyl-tRNA(Gln) + L-glutamate + ADP + phosphate + H(+). The enzyme catalyses L-aspartyl-tRNA(Asn) + L-glutamine + ATP + H2O = L-asparaginyl-tRNA(Asn) + L-glutamate + ADP + phosphate + 2 H(+). Its function is as follows. Allows the formation of correctly charged Asn-tRNA(Asn) or Gln-tRNA(Gln) through the transamidation of misacylated Asp-tRNA(Asn) or Glu-tRNA(Gln) in organisms which lack either or both of asparaginyl-tRNA or glutaminyl-tRNA synthetases. The reaction takes place in the presence of glutamine and ATP through an activated phospho-Asp-tRNA(Asn) or phospho-Glu-tRNA(Gln). The polypeptide is Aspartyl/glutamyl-tRNA(Asn/Gln) amidotransferase subunit C (Roseobacter denitrificans (strain ATCC 33942 / OCh 114) (Erythrobacter sp. (strain OCh 114))).